Reading from the N-terminus, the 139-residue chain is MGETIRFGVSIDEKLLESFDGLIEEKGYMNRSEAIRDLIRAALVELKWEVGDEETVGTVTLVYDHHVRDLSDKLTEQQHAHHDKVISALHVHLDAHNCLEVLVVRGKAREVKKIADELIGVKGVKHGKLVMTTTGEELH.

Ni(2+) is bound by residues histidine 79, histidine 90, histidine 92, and cysteine 98.

The protein belongs to the transcriptional regulatory CopG/NikR family. The cofactor is Ni(2+).

Transcriptional regulator. This chain is Putative nickel-responsive regulator, found in Geobacter sulfurreducens (strain ATCC 51573 / DSM 12127 / PCA).